Reading from the N-terminus, the 145-residue chain is Transcription elongation factor 1 (145 aa).

Zn(2+)-binding residues include Cys-25, Cys-28, Cys-49, and Cys-52. Ser-55 bears the Phosphoserine mark. The segment at 80–145 is disordered; it reads VNSGRGSDTD…RGALVDSDDE (66 aa). 2 stretches are compositionally biased toward acidic residues: residues 88–104 and 113–126; these read TDDG…SDSE and GEID…DSDE. 3 positions are modified to phosphoserine: Ser-117, Ser-124, and Ser-142.

It belongs to the ELOF1 family.

It localises to the nucleus. Functionally, transcription elongation factor implicated in the maintenance of proper chromatin structure in actively transcribed regions. The protein is Transcription elongation factor 1 (ELF1) of Saccharomyces cerevisiae (strain ATCC 204508 / S288c) (Baker's yeast).